The following is a 444-amino-acid chain: Phosphoglucosamine mutase (444 aa).

The active-site Phosphoserine intermediate is the serine 102. Mg(2+) is bound by residues serine 102, aspartate 239, aspartate 241, and aspartate 243. Serine 102 bears the Phosphoserine mark.

Belongs to the phosphohexose mutase family. The cofactor is Mg(2+). Post-translationally, activated by phosphorylation.

It catalyses the reaction alpha-D-glucosamine 1-phosphate = D-glucosamine 6-phosphate. In terms of biological role, catalyzes the conversion of glucosamine-6-phosphate to glucosamine-1-phosphate. This is Phosphoglucosamine mutase from Saccharopolyspora erythraea (strain ATCC 11635 / DSM 40517 / JCM 4748 / NBRC 13426 / NCIMB 8594 / NRRL 2338).